The primary structure comprises 333 residues: MKTLSEFIVERQAEYPNAKGELSGILSSIRLLAKIIHRDINKAGLTNILGQSGIENVQGESQMKLDLFAHNTMKAALMAREEVAGFASEEEESFIAFDTERGRNAKYIILTDPLDGSSNIDVNVSVGTIFSIYRRVSPIGSPVTLEDFMQPGNKQVAAGYIVYGSSTMLVYTTGNGVNGFTYDPSIGTFCLSHENMQMPKEGKIYSINEGQYLKFPQGVKKYIKYCQEEDKATHRPYVSRYIGSLVADFHRNLLKGGIYIYPSATNYPNGKLRLLYEGNPIAFLAEQAGGVATDGYRRILDIEPTALHERVPLFVGSEDMVKKAQEMMEEFKE.

Residues E89, D112, L114, and D115 each coordinate Mg(2+). Substrate contacts are provided by residues 115 to 118 (DGSS), N208, Y241, and K271. A Mg(2+)-binding site is contributed by E277.

Belongs to the FBPase class 1 family. As to quaternary structure, homotetramer. Mg(2+) serves as cofactor.

The protein localises to the cytoplasm. It carries out the reaction beta-D-fructose 1,6-bisphosphate + H2O = beta-D-fructose 6-phosphate + phosphate. It functions in the pathway carbohydrate biosynthesis; gluconeogenesis. The protein is Fructose-1,6-bisphosphatase class 1 of Haemophilus influenzae (strain ATCC 51907 / DSM 11121 / KW20 / Rd).